Here is a 351-residue protein sequence, read N- to C-terminus: Glycerol-3-phosphate dehydrogenase [NAD(P)+] (351 aa).

NADPH contacts are provided by Ser-18, Trp-19, Arg-38, and Lys-122. The sn-glycerol 3-phosphate site is built by Lys-122, Gly-153, and Ser-155. Ala-157 is an NADPH binding site. Residues Lys-208, Asp-261, Ser-271, Arg-272, and Asn-273 each coordinate sn-glycerol 3-phosphate. Lys-208 functions as the Proton acceptor in the catalytic mechanism. Arg-272 is a binding site for NADPH. Position 297 (Glu-297) interacts with NADPH.

The protein belongs to the NAD-dependent glycerol-3-phosphate dehydrogenase family.

It localises to the cytoplasm. It carries out the reaction sn-glycerol 3-phosphate + NAD(+) = dihydroxyacetone phosphate + NADH + H(+). The enzyme catalyses sn-glycerol 3-phosphate + NADP(+) = dihydroxyacetone phosphate + NADPH + H(+). The protein operates within membrane lipid metabolism; glycerophospholipid metabolism. In terms of biological role, catalyzes the reduction of the glycolytic intermediate dihydroxyacetone phosphate (DHAP) to sn-glycerol 3-phosphate (G3P), the key precursor for phospholipid synthesis. This chain is Glycerol-3-phosphate dehydrogenase [NAD(P)+], found in Bordetella bronchiseptica (strain ATCC BAA-588 / NCTC 13252 / RB50) (Alcaligenes bronchisepticus).